A 608-amino-acid polypeptide reads, in one-letter code: UvrABC system protein C (608 aa).

A GIY-YIG domain is found at 18-96 (NQPGVYRMYN…IKKYKPRYNV (79 aa)). One can recognise a UVR domain in the interval 206 to 241 (KQVIDSLVQHMERASTDLRFEAAARYRDQISALNKV).

This sequence belongs to the UvrC family. Interacts with UvrB in an incision complex.

It is found in the cytoplasm. Its function is as follows. The UvrABC repair system catalyzes the recognition and processing of DNA lesions. UvrC both incises the 5' and 3' sides of the lesion. The N-terminal half is responsible for the 3' incision and the C-terminal half is responsible for the 5' incision. This is UvrABC system protein C from Pseudoalteromonas atlantica (strain T6c / ATCC BAA-1087).